A 542-amino-acid polypeptide reads, in one-letter code: CTP synthase (542 aa).

Residues 1–265 (MARYVFITGG…DSEVLSAFGI (265 aa)) form an amidoligase domain region. S13 contacts CTP. A UTP-binding site is contributed by S13. 14–19 (SLGKGI) is a binding site for ATP. Y54 is a binding site for L-glutamine. Position 71 (D71) interacts with ATP. Positions 71 and 139 each coordinate Mg(2+). CTP-binding positions include 146–148 (DIE), 186–191 (KTKPTQ), and K222. UTP-binding positions include 186 to 191 (KTKPTQ) and K222. The Glutamine amidotransferase type-1 domain occupies 291–541 (TIAVVGKYTG…IEAAIEQSRL (251 aa)). Position 353 (G353) interacts with L-glutamine. C380 serves as the catalytic Nucleophile; for glutamine hydrolysis. Residues 381–384 (FGMQ), E404, and R469 contribute to the L-glutamine site. Residues H514 and E516 contribute to the active site.

It belongs to the CTP synthase family. As to quaternary structure, homotetramer.

It carries out the reaction UTP + L-glutamine + ATP + H2O = CTP + L-glutamate + ADP + phosphate + 2 H(+). It catalyses the reaction L-glutamine + H2O = L-glutamate + NH4(+). The enzyme catalyses UTP + NH4(+) + ATP = CTP + ADP + phosphate + 2 H(+). Its pathway is pyrimidine metabolism; CTP biosynthesis via de novo pathway; CTP from UDP: step 2/2. Allosterically activated by GTP, when glutamine is the substrate; GTP has no effect on the reaction when ammonia is the substrate. The allosteric effector GTP functions by stabilizing the protein conformation that binds the tetrahedral intermediate(s) formed during glutamine hydrolysis. Inhibited by the product CTP, via allosteric rather than competitive inhibition. Catalyzes the ATP-dependent amination of UTP to CTP with either L-glutamine or ammonia as the source of nitrogen. Regulates intracellular CTP levels through interactions with the four ribonucleotide triphosphates. This is CTP synthase from Brucella melitensis biotype 2 (strain ATCC 23457).